A 274-amino-acid chain; its full sequence is Large ribosomal subunit protein uL2cz (274 aa).

Disordered regions lie at residues 1-25 (MAIHLYKTSTPSTRNGTVDSQVKSN) and 224-274 (NPVD…RRSK). Positions 7–25 (KTSTPSTRNGTVDSQVKSN) are enriched in polar residues.

It belongs to the universal ribosomal protein uL2 family. As to quaternary structure, part of the 50S ribosomal subunit.

It is found in the plastid. The protein resides in the chloroplast. This is Large ribosomal subunit protein uL2cz (rpl2-A) from Coffea arabica (Arabian coffee).